The sequence spans 502 residues: ATP synthase subunit beta (502 aa).

156–163 (GGAGVGKT) contributes to the ATP binding site.

This sequence belongs to the ATPase alpha/beta chains family. As to quaternary structure, F-type ATPases have 2 components, CF(1) - the catalytic core - and CF(0) - the membrane proton channel. CF(1) has five subunits: alpha(3), beta(3), gamma(1), delta(1), epsilon(1). CF(0) has three main subunits: a(1), b(2) and c(9-12). The alpha and beta chains form an alternating ring which encloses part of the gamma chain. CF(1) is attached to CF(0) by a central stalk formed by the gamma and epsilon chains, while a peripheral stalk is formed by the delta and b chains.

It is found in the cell membrane. The catalysed reaction is ATP + H2O + 4 H(+)(in) = ADP + phosphate + 5 H(+)(out). Produces ATP from ADP in the presence of a proton gradient across the membrane. The catalytic sites are hosted primarily by the beta subunits. This chain is ATP synthase subunit beta, found in Cellulophaga lytica (Cytophaga lytica).